The primary structure comprises 426 residues: Inhibin beta A chain (426 aa).

The N-terminal stretch at 1 to 20 is a signal peptide; sequence MPLLWLRGFLLASCWIIVRS. Residues 21-310 constitute a propeptide that is removed on maturation; the sequence is SPTPGSEGHS…EDHPHRRRRR (290 aa). The N-linked (GlcNAc...) asparagine glycan is linked to N165. A disordered region spans residues 259 to 288; the sequence is KKKKKEEEGEGKKKGGGEGGAGADEEKEQS. Residues 263 to 274 are compositionally biased toward basic and acidic residues; sequence KEEEGEGKKKGG. 4 disulfide bridges follow: C314–C322, C321–C391, C350–C423, and C354–C425.

It belongs to the TGF-beta family. As to quaternary structure, dimeric, linked by one or more disulfide bonds. Inhibin A is a dimer of alpha/INHA and beta-A/INHBA. Activin A is a homodimer of beta-A/INHBA. Activin AB is a dimer of beta-A/INHBA and beta-B/INHBB. Interacts with FST and FSTL3; these interactions prevent activin A interaction to its type II receptor. Activin A interacts with ACVR2A. Activin A interacts with BMPR2. Inhibin A interacts with ACVR1; this interaction creates a non-signaling complex (NSC) that inhibits ACVR1-mediated BMP signaling. Inhibin A interacts with ACVR2A.

It localises to the secreted. Functionally, inhibins/activins are involved in regulating a number of diverse functions such as hypothalamic and pituitary hormone secretion, gonadal hormone secretion, germ cell development and maturation, erythroid differentiation, insulin secretion, nerve cell survival, embryonic axial development or bone growth, depending on their subunit composition. In terms of biological role, activin A is a homodimer of INHBA that plays a role in several essential biological processes including embryonic development, stem cell maintenance and differentiation, haematopoiesis, cell proliferation and tissue fibrosis. Signals through type I (such as ACVR1B or ACVR1C) and type II receptors (such as ACVR2A, ACVR2B or BMPR2) which, upon ligand binding, phosphorylate SMAD2 and SMAD3 intracellular signaling mediators that form a complex with SMAD4, translocate to the nucleus and modulate gene expression. Can also activate alternative non-canonical intracellular signaling pathways including the p38 MAPK, extracellular signal-regulated kinases 1/2 (ERK1/2) and c-Jun N-terminal kinases (JNKs) to modulate cell migration and differentiation. Alternatively, promotes osteoblastic differentiation via ACVRL1-SMAD1/5/9 pathway. In addition, can engage the type I receptor ACVR1 to form an ACVR1-activin A-type II receptor non-signaling complex (NSC) that renders receptors unavailable for engagement with BMPs, hence resulting in an apparent inhibition of ACVR1-mediated BMP signaling. Its function is as follows. Inhibin A is a dimer of alpha/INHA and beta-A/INHBA that functions as a feedback regulator in the hypothalamic-pituitary-gonadal (HPG) axis. Inhibits the secretion of FSH from the anterior pituitary gland by acting on pituitary gonadotrope cells. Antagonizes activin A by binding to the proteoglycan, betaglycan, and forming a stable complex with and, thereby, sequestering type II activin receptors while excluding type I receptor. The sequence is that of Inhibin beta A chain (INHBA) from Homo sapiens (Human).